The primary structure comprises 1077 residues: Error-prone DNA polymerase (1077 aa).

It belongs to the DNA polymerase type-C family. DnaE2 subfamily.

The protein resides in the cytoplasm. The catalysed reaction is DNA(n) + a 2'-deoxyribonucleoside 5'-triphosphate = DNA(n+1) + diphosphate. Its function is as follows. DNA polymerase involved in damage-induced mutagenesis and translesion synthesis (TLS). It is not the major replicative DNA polymerase. This is Error-prone DNA polymerase from Brucella suis biovar 1 (strain 1330).